Consider the following 338-residue polypeptide: tRNA N6-adenosine threonylcarbamoyltransferase (338 aa).

2 residues coordinate Fe cation: histidine 111 and histidine 115. Residues 134 to 138 (LLSGG), aspartate 167, glycine 180, and asparagine 275 contribute to the substrate site. Aspartate 304 contributes to the Fe cation binding site.

This sequence belongs to the KAE1 / TsaD family. The cofactor is Fe(2+).

The protein resides in the cytoplasm. The catalysed reaction is L-threonylcarbamoyladenylate + adenosine(37) in tRNA = N(6)-L-threonylcarbamoyladenosine(37) in tRNA + AMP + H(+). Functionally, required for the formation of a threonylcarbamoyl group on adenosine at position 37 (t(6)A37) in tRNAs that read codons beginning with adenine. Is involved in the transfer of the threonylcarbamoyl moiety of threonylcarbamoyl-AMP (TC-AMP) to the N6 group of A37, together with TsaE and TsaB. TsaD likely plays a direct catalytic role in this reaction. This is tRNA N6-adenosine threonylcarbamoyltransferase from Leptospira interrogans serogroup Icterohaemorrhagiae serovar copenhageni (strain Fiocruz L1-130).